The primary structure comprises 95 residues: Secretoglobin family 1C member 1 (95 aa).

Residues 1 to 23 (MKGSSALLLVALSLLCVCGLTRA) form the signal peptide.

This sequence belongs to the secretoglobin family.

It localises to the secreted. This is Secretoglobin family 1C member 1 (Scgb1c1) from Mus musculus (Mouse).